We begin with the raw amino-acid sequence, 546 residues long: Cysteine--tRNA ligase (546 aa).

Cys57 is a binding site for Zn(2+). Residues 59 to 69 (ATVQSSPHIGH) carry the 'HIGH' region motif. Residues 211 to 236 (PSVDATGADKYNPVDPADASPDKHDP) form a disordered region. The Zn(2+) site is built by Cys270, His295, and Glu299. Residues 326–330 (KMSKS) carry the 'KMSKS' region motif. Lys329 provides a ligand contact to ATP.

It belongs to the class-I aminoacyl-tRNA synthetase family. Monomer. The cofactor is Zn(2+).

The protein localises to the cytoplasm. It catalyses the reaction tRNA(Cys) + L-cysteine + ATP = L-cysteinyl-tRNA(Cys) + AMP + diphosphate. This Bifidobacterium longum (strain NCC 2705) protein is Cysteine--tRNA ligase.